Reading from the N-terminus, the 186-residue chain is Chromosome-anchoring protein RacA (186 aa).

Residues 3–23 (TADAANELGVSTKTVQRWVKQ) constitute a DNA-binding region (H-T-H motif). Positions 90–170 (ERLEERLQRF…NRREKDTAVR (81 aa)) form a coiled coil. The disordered stretch occupies residues 158–186 (ESMNRREKDTAVRREEKKPKSKLKSIFSF). Positions 160–175 (MNRREKDTAVRREEKK) are enriched in basic and acidic residues.

Belongs to the RacA family.

It is found in the cytoplasm. Functionally, required for the formation of axial filaments and for anchoring the origin regions at the cell poles in sporulating cells, thus ensuring proper chromosome segregation in the prespore. Binds in a dispersed manner throughout the chromosome but preferentially to sites clustered in the origin portion of the chromosome, causing condensation of the chromosome and its remodeling into an elongated, anchored structure. The chain is Chromosome-anchoring protein RacA from Bacillus licheniformis (strain ATCC 14580 / DSM 13 / JCM 2505 / CCUG 7422 / NBRC 12200 / NCIMB 9375 / NCTC 10341 / NRRL NRS-1264 / Gibson 46).